Reading from the N-terminus, the 281-residue chain is NADH-cytochrome b5 reductase 1 (281 aa).

Residues V2–V22 form a helical membrane-spanning segment. Residues E37–Q141 form the FAD-binding FR-type domain. FAD-binding positions include A121–G136 and E147–L179.

It belongs to the flavoprotein pyridine nucleotide cytochrome reductase family. Monomer. Component of the 2-(3-amino-3-carboxypropyl)histidine synthase complex composed of DPH1, DPH2, DPH3 and a NADH-dependent reductase, predominantly CBR1. FAD is required as a cofactor.

Its subcellular location is the mitochondrion outer membrane. It carries out the reaction 2 Fe(III)-[cytochrome b5] + NADH = 2 Fe(II)-[cytochrome b5] + NAD(+) + H(+). The enzyme catalyses 2 Fe(3+)-[Dph3] + NADH = 2 Fe(2+)-[Dph3] + NAD(+) + H(+). Its pathway is protein modification; peptidyl-diphthamide biosynthesis. NADH-dependent reductase for DPH3 and cytochrome b5. Required for the first step of diphthamide biosynthesis, a post-translational modification of histidine which occurs in elongation factor 2. DPH1 and DPH2 transfer a 3-amino-3-carboxypropyl (ACP) group from S-adenosyl-L-methionine (SAM) to a histidine residue, the reaction is assisted by a reduction system comprising DPH3 and a NADH-dependent reductase, predominantly CBR1. By reducing DPH3, also involved in the formation of the tRNA wobble base modification mcm5s 2U (5-methoxycarbonylmethyl-2-thiouridine), mediated by the elongator complex. The cytochrome b5/NADH cytochrome b5 reductase electron transfer system supports the catalytic activity of several sterol biosynthetic enzymes. This chain is NADH-cytochrome b5 reductase 1 (CBR1), found in Kluyveromyces lactis (strain ATCC 8585 / CBS 2359 / DSM 70799 / NBRC 1267 / NRRL Y-1140 / WM37) (Yeast).